The sequence spans 443 residues: Probable nitrate/nitrite antiporter NarK2 (443 aa).

The next 12 helical transmembrane spans lie at Ile-32–Val-52, Leu-66–Phe-86, His-95–Val-115, Trp-123–Met-143, Ile-172–Gly-192, Asn-210–Leu-230, Ser-256–Ile-276, Tyr-292–Asp-312, Leu-314–Val-334, Phe-346–Ser-366, Val-383–Ala-403, and Thr-409–Leu-429.

This sequence belongs to the major facilitator superfamily. Nitrate/nitrite porter (TC 2.A.1.8) family.

The protein resides in the cell membrane. The catalysed reaction is nitrate(in) + nitrite(out) = nitrate(out) + nitrite(in). In terms of biological role, probable nitrate/nitrite antiporter that may be involved in nitrate import and nitrite export during anaerobic growth. This chain is Probable nitrate/nitrite antiporter NarK2, found in Thermus thermophilus.